A 434-amino-acid polypeptide reads, in one-letter code: Glutamate-1-semialdehyde 2,1-aminomutase (434 aa).

N6-(pyridoxal phosphate)lysine is present on K267.

It belongs to the class-III pyridoxal-phosphate-dependent aminotransferase family. HemL subfamily. In terms of assembly, homodimer. It depends on pyridoxal 5'-phosphate as a cofactor.

The protein resides in the cytoplasm. The enzyme catalyses (S)-4-amino-5-oxopentanoate = 5-aminolevulinate. Its pathway is porphyrin-containing compound metabolism; protoporphyrin-IX biosynthesis; 5-aminolevulinate from L-glutamyl-tRNA(Glu): step 2/2. The protein operates within porphyrin-containing compound metabolism; chlorophyll biosynthesis. This is Glutamate-1-semialdehyde 2,1-aminomutase from Roseiflexus castenholzii (strain DSM 13941 / HLO8).